The chain runs to 428 residues: Sporulation kinase B (428 aa).

Residues 1–6 are Cytoplasmic-facing; sequence MEILKD. Residues 7–27 traverse the membrane as a helical segment; it reads YLLHICFILFPILLYQVFWLG. Over 28 to 37 the chain is Extracellular; it reads KPAILVPKIN. A helical membrane pass occupies residues 38–58; it reads SGLVTLFACGASVLCIIFPIH. The Cytoplasmic segment spans residues 59-68; the sequence is EMDYIQYGLQ. A helical transmembrane segment spans residues 69 to 89; the sequence is MIPVIICLFYISTASGLTVAA. The Extracellular segment spans residues 90 to 99; sequence SVLCFELLFY. A helical transmembrane segment spans residues 100-120; the sequence is EPSAMFVFTLLPFLIIIPILF. The Cytoplasmic segment spans residues 121–132; the sequence is QKKWPFMSKAKK. Residues 133 to 153 form a helical membrane-spanning segment; the sequence is LLLSLLISCVEIFLFFASSWI. Over 154–166 the chain is Extracellular; it reads LSALNILNFQKSG. The chain crosses the membrane as a helical span at residues 167-187; sequence IFVYEAAVSGLFRSSVLLLSI. Residues 188 to 428 lie on the Cytoplasmic side of the membrane; sequence YIIESIAENI…TIKLPADLPH (241 aa). A Histidine kinase domain is found at 218-426; the sequence is SVAHEVRNPL…TVTIKLPADL (209 aa). The residue at position 221 (H221) is a Phosphohistidine; by autocatalysis.

It is found in the cell membrane. It catalyses the reaction ATP + protein L-histidine = ADP + protein N-phospho-L-histidine.. Functionally, phosphorylates the sporulation-regulatory proteins spo0A and spo0F. Spo0F is required for the KinB activity. The polypeptide is Sporulation kinase B (kinB) (Bacillus subtilis (strain 168)).